A 137-amino-acid polypeptide reads, in one-letter code: uncharacterized protein (137 aa).

This is an uncharacterized protein from Archaeoglobus fulgidus (strain ATCC 49558 / DSM 4304 / JCM 9628 / NBRC 100126 / VC-16).